A 147-amino-acid polypeptide reads, in one-letter code: Cyanate hydratase (147 aa).

Catalysis depends on residues R88, E91, and S114.

It belongs to the cyanase family.

It carries out the reaction cyanate + hydrogencarbonate + 3 H(+) = NH4(+) + 2 CO2. Functionally, catalyzes the reaction of cyanate with bicarbonate to produce ammonia and carbon dioxide. In Polaromonas sp. (strain JS666 / ATCC BAA-500), this protein is Cyanate hydratase.